The primary structure comprises 384 residues: Dual-specificity RNA methyltransferase RlmN (384 aa).

The active-site Proton acceptor is the Glu105. Residues 111 to 350 form the Radical SAM core domain; that stretch reads EDDRATLCVS…TIVRKTRGDD (240 aa). Cys118 and Cys355 are disulfide-bonded. Positions 125, 129, and 132 each coordinate [4Fe-4S] cluster. S-adenosyl-L-methionine-binding positions include 179–180, Ser211, 233–235, and Asn312; these read GE and SLH. Residue Cys355 is the S-methylcysteine intermediate of the active site.

It belongs to the radical SAM superfamily. RlmN family. Requires [4Fe-4S] cluster as cofactor.

It is found in the cytoplasm. The catalysed reaction is adenosine(2503) in 23S rRNA + 2 reduced [2Fe-2S]-[ferredoxin] + 2 S-adenosyl-L-methionine = 2-methyladenosine(2503) in 23S rRNA + 5'-deoxyadenosine + L-methionine + 2 oxidized [2Fe-2S]-[ferredoxin] + S-adenosyl-L-homocysteine. It catalyses the reaction adenosine(37) in tRNA + 2 reduced [2Fe-2S]-[ferredoxin] + 2 S-adenosyl-L-methionine = 2-methyladenosine(37) in tRNA + 5'-deoxyadenosine + L-methionine + 2 oxidized [2Fe-2S]-[ferredoxin] + S-adenosyl-L-homocysteine. Specifically methylates position 2 of adenine 2503 in 23S rRNA and position 2 of adenine 37 in tRNAs. m2A2503 modification seems to play a crucial role in the proofreading step occurring at the peptidyl transferase center and thus would serve to optimize ribosomal fidelity. The protein is Dual-specificity RNA methyltransferase RlmN of Escherichia coli O157:H7.